An 869-amino-acid polypeptide reads, in one-letter code: Retrovirus-related Pol polyprotein from type-1 retrotransposable element R2 (869 aa).

Residues Ile199 to Tyr475 form the Reverse transcriptase domain. The segment at Leu601–Trp869 is nucleic acid-binding endonuclease.

It catalyses the reaction DNA(n) + a 2'-deoxyribonucleoside 5'-triphosphate = DNA(n+1) + diphosphate. The polypeptide is Retrovirus-related Pol polyprotein from type-1 retrotransposable element R2 (Bradysia coprophila (Dark-winged fungus gnat)).